The following is a 137-amino-acid chain: Small ribosomal subunit protein uS12 (137 aa).

Residues 1 to 23 (MPTINQLVRKPRKSNATKSKSPA) form a disordered region. A 3-methylthioaspartic acid modification is found at Asp102.

This sequence belongs to the universal ribosomal protein uS12 family. As to quaternary structure, part of the 30S ribosomal subunit. Contacts proteins S8 and S17. May interact with IF1 in the 30S initiation complex.

Its function is as follows. With S4 and S5 plays an important role in translational accuracy. In terms of biological role, interacts with and stabilizes bases of the 16S rRNA that are involved in tRNA selection in the A site and with the mRNA backbone. Located at the interface of the 30S and 50S subunits, it traverses the body of the 30S subunit contacting proteins on the other side and probably holding the rRNA structure together. The combined cluster of proteins S8, S12 and S17 appears to hold together the shoulder and platform of the 30S subunit. The protein is Small ribosomal subunit protein uS12 of Leuconostoc citreum (strain KM20).